A 110-amino-acid polypeptide reads, in one-letter code: U1-lycotoxin-Ls1kk (110 aa).

Residues 1–20 (MKFVLLFGVFLVTLFSYSSA) form the signal peptide. The propeptide occupies 21 to 44 (EMLDDFDQADEDELLSLIEKEEAR). Disulfide bonds link Cys-47–Cys-62, Cys-54–Cys-71, Cys-61–Cys-89, and Cys-73–Cys-87.

It belongs to the neurotoxin 19 (CSTX) family. 03 subfamily. As to expression, expressed by the venom gland.

The protein resides in the secreted. The sequence is that of U1-lycotoxin-Ls1kk from Lycosa singoriensis (Wolf spider).